The chain runs to 505 residues: MMNLLFHRLKRPLAAAFVGASTTLAFAPYQLWPIAILSPAILLILLANQTPKRALWIGYAWGLGQFATGVSWVYVSISGFGGMPLIANLFLMGMLIAYLAVYSGLFAWLNNKFFPQFSLSKALLAAPALWLITDWLRGWVMTGFPWLWLGYSQIDAPLASFAPIGGVELLTLFVLISAGALAYAWIHKQWLMIIIPVVLMSAGFGIRQYDWVTPRPEDTTKVALIQGNVDQNLKWLPSQRWPTIMKYADLTRENWDADIIVWPEAAIPAFEVEVPSFLSNIDSAAKMNNSAIITGIVNQSEDRQFYNSILSLGVTPYGDYSFDMSERYHKHHLLPFGEFVPFEDILRPLAPFFNLPMSSFSRGAFVQPNIVANGMHMAPALCYEIIFNEQVRQNVTDETDFILTLSNDAWFGHSIGPLQHMEIARMRALELGKPLIRSTNNGLTAVTDYKGKIVEQVPQFETAVLRAELTPTDGTTPYRTFGTWPLYFWVALSLMLAWWLPRKKD.

Helical transmembrane passes span 26–46 (FAPY…LILL), 66–86 (FATG…MPLI), 89–109 (LFLM…FAWL), 129–149 (LWLI…WLWL), 161–181 (FAPI…AGAL), and 186–206 (IHKQ…GFGI). The CN hydrolase domain occupies 225–471 (IQGNVDQNLK…TAVLRAELTP (247 aa)). Residue E264 is the Proton acceptor of the active site. K330 is a catalytic residue. C382 acts as the Nucleophile in catalysis. Residues 481–501 (FGTWPLYFWVALSLMLAWWLP) traverse the membrane as a helical segment.

The protein belongs to the CN hydrolase family. Apolipoprotein N-acyltransferase subfamily.

The protein localises to the cell inner membrane. The catalysed reaction is N-terminal S-1,2-diacyl-sn-glyceryl-L-cysteinyl-[lipoprotein] + a glycerophospholipid = N-acyl-S-1,2-diacyl-sn-glyceryl-L-cysteinyl-[lipoprotein] + a 2-acyl-sn-glycero-3-phospholipid + H(+). It functions in the pathway protein modification; lipoprotein biosynthesis (N-acyl transfer). Its function is as follows. Catalyzes the phospholipid dependent N-acylation of the N-terminal cysteine of apolipoprotein, the last step in lipoprotein maturation. This is Apolipoprotein N-acyltransferase from Vibrio parahaemolyticus serotype O3:K6 (strain RIMD 2210633).